A 542-amino-acid polypeptide reads, in one-letter code: Prolyl 3-hydroxylase OGFOD1 (542 aa).

The Fe2OG dioxygenase domain maps to 134–239 (DLESTIDMSC…RLSISGWFHG (106 aa)). Fe cation contacts are provided by histidine 155 and aspartate 157. Residue tyrosine 169 participates in 2-oxoglutarate binding. Histidine 218 provides a ligand contact to Fe cation. A 2-oxoglutarate-binding site is contributed by arginine 230. Positions 373 to 435 (EDEMNDKKEA…TKKESSVPTC (63 aa)) are disordered. The segment covering 400–416 (ENNQTAISNNSQQSNEQ) has biased composition (polar residues).

Belongs to the TPA1 family. Monomer. Requires Fe(2+) as cofactor. It depends on L-ascorbate as a cofactor.

It localises to the cytoplasm. The protein localises to the nucleus. The catalysed reaction is [ribosomal protein uS12]-L-proline + 2-oxoglutarate + O2 = [ribosomal protein uS12]-(3S)-3-hydroxy-L-proline + succinate + CO2. Functionally, prolyl 3-hydroxylase that catalyzes 3-hydroxylation of 'Pro-62' of small ribosomal subunit uS12 (RPS23), thereby regulating protein translation termination efficiency. Involved in stress granule formation. This is Prolyl 3-hydroxylase OGFOD1 (OGFOD1) from Pongo abelii (Sumatran orangutan).